Here is a 1675-residue protein sequence, read N- to C-terminus: Clathrin heavy chain 1 (1675 aa).

Ala2 carries the post-translational modification N-acetylalanine. Residues 2 to 479 are globular terminal domain; sequence AQILPIRFQE…VDPTLALSVY (478 aa). WD40-like repeat regions lie at residues 24–67, 68–107, 108–149, 150–195, 196–257, 258–301, and 302–330; these read NIGF…RPIS, ADSAIMNPASKVIALKAGKTLQIFNIEMKSKMKAHTMTDD, VTFW…SSLA, GCQI…QPIE, GHAA…PEAQ, NDFP…ISGE, and TIFVTAPHEATAGIIGVNRKGQVLSVCVE. A Phosphoserine modification is found at Ser67. A Phosphothreonine modification is found at Thr105. The residue at position 184 (Tyr184) is a Phosphotyrosine. The residue at position 394 (Thr394) is a Phosphothreonine. The tract at residues 449–465 is binding site for the uncoating ATPase, involved in lattice disassembly; that stretch reads EKWLKEDKLECSEELGD. Residues 480 to 523 are flexible linker; sequence LRANVPNKVIQCFAETGQVQKIVLYAKKVGYTPDWIFLLRNVMR. Residues 524–634 form a distal segment region; it reads ISPDQGQQFA…RALEHFTDLY (111 aa). Positions 524-1675 are heavy chain arm; the sequence is ISPDQGQQFA…QPQPGFGYSM (1152 aa). CHCR repeat units lie at residues 537 to 683, 686 to 828, 833 to 972, 979 to 1124, 1128 to 1269, 1274 to 1420, and 1423 to 1566; these read VQDE…QICV, ASKY…SEDV, ILVV…PLID, LSET…VKEA, YIKA…FRLA, LHIV…LLLN, and LMVL…RECF. The residue at position 634 (Tyr634) is a Phosphotyrosine. The proximal segment stretch occupies residues 639–1675; that stretch reads AVVHTHLLNP…QPQPGFGYSM (1037 aa). Lys737 carries the post-translational modification N6-succinyllysine. Lys856 is subject to N6-acetyllysine. Residue Tyr899 is modified to Phosphotyrosine. A Phosphoserine modification is found at Ser1167. At Tyr1206 the chain carries Phosphotyrosine. Residues 1213-1522 are involved in binding clathrin light chain; the sequence is AAKLLYNNVS…YLFKGNNRWK (310 aa). Ser1229 is modified (phosphoserine). An N6-acetyllysine; alternate modification is found at Lys1441. N6-succinyllysine; alternate is present on Lys1441. Phosphotyrosine is present on residues Tyr1477 and Tyr1487. Ser1494 is modified (phosphoserine). Position 1501 is an N6-acetyllysine (Lys1501). The tract at residues 1550–1675 is trimerization; that stretch reads AEELLQWFLQ…QPQPGFGYSM (126 aa).

This sequence belongs to the clathrin heavy chain family. As to quaternary structure, clathrin triskelions, composed of 3 heavy chains and 3 light chains, are the basic subunits of the clathrin coat. In the presence of light chains, hub assembly is influenced by both the pH and the concentration of calcium. Interacts with HIP1. Interacts with DENND1A, DENND1B and DENND1C. Interacts with ERBB2. Interacts with FKBP6. Interacts with OCRL. Interacts with CKAP5 and TACC3 forming the TACC3/ch-TOG/clathrin complex located at spindle inter-microtubules bridges; the complex implicates clathrin triskelions; TACC3 and CLTC are proposed to form a composite microtubule interaction surface. Plays a role in early autophagosome formation. Interacts with ATG16L1 (via N-terminus). Interacts with RFTN1; the interaction occurs in response to pathogens. Interacts with USP2 isoform 2. Interacts with TMEM106B (via N-terminus). Interacts with DNAJC6; this interaction produces a local change in heavy-chain contacts, creating a detectable global distortion of the clathrin coat and leads to the recruitment of HSPA8.

It localises to the cytoplasmic vesicle membrane. The protein localises to the membrane. The protein resides in the coated pit. Its subcellular location is the melanosome. It is found in the cytoplasm. It localises to the cytoskeleton. The protein localises to the spindle. Its function is as follows. Clathrin is the major protein of the polyhedral coat of coated pits and vesicles. Two different adapter protein complexes link the clathrin lattice either to the plasma membrane or to the trans-Golgi network. Acts as a component of the TACC3/ch-TOG/clathrin complex proposed to contribute to stabilization of kinetochore fibers of the mitotic spindle by acting as inter-microtubule bridge. The TACC3/ch-TOG/clathrin complex is required for the maintenance of kinetochore fiber tension. Plays a role in early autophagosome formation. Interaction with DNAJC6 mediates the recruitment of HSPA8 to the clathrin lattice and creates local destabilization of the lattice promoting uncoating. The protein is Clathrin heavy chain 1 of Mus musculus (Mouse).